A 90-amino-acid polypeptide reads, in one-letter code: Translation initiation factor IF-1 2 (90 aa).

The S1-like domain maps to 1 to 72 (MAKEELLELD…TKGRINFRHK (72 aa)).

Belongs to the IF-1 family. As to quaternary structure, component of the 30S ribosomal translation pre-initiation complex which assembles on the 30S ribosome in the order IF-2 and IF-3, IF-1 and N-formylmethionyl-tRNA(fMet); mRNA recruitment can occur at any time during PIC assembly.

It localises to the cytoplasm. Its function is as follows. One of the essential components for the initiation of protein synthesis. Stabilizes the binding of IF-2 and IF-3 on the 30S subunit to which N-formylmethionyl-tRNA(fMet) subsequently binds. Helps modulate mRNA selection, yielding the 30S pre-initiation complex (PIC). Upon addition of the 50S ribosomal subunit IF-1, IF-2 and IF-3 are released leaving the mature 70S translation initiation complex. The sequence is that of Translation initiation factor IF-1 2 from Paraburkholderia xenovorans (strain LB400).